Reading from the N-terminus, the 167-residue chain is Phosphopantetheine adenylyltransferase (167 aa).

Substrate is bound at residue threonine 9. Residues threonine 9–phenylalanine 10 and histidine 17 each bind ATP. Substrate is bound by residues lysine 41, leucine 73, and arginine 87. Residues glycine 88–arginine 90, glutamate 98, and tyrosine 123–threonine 129 each bind ATP.

This sequence belongs to the bacterial CoaD family. As to quaternary structure, homohexamer. Mg(2+) serves as cofactor.

It is found in the cytoplasm. The catalysed reaction is (R)-4'-phosphopantetheine + ATP + H(+) = 3'-dephospho-CoA + diphosphate. The protein operates within cofactor biosynthesis; coenzyme A biosynthesis; CoA from (R)-pantothenate: step 4/5. In terms of biological role, reversibly transfers an adenylyl group from ATP to 4'-phosphopantetheine, yielding dephospho-CoA (dPCoA) and pyrophosphate. The protein is Phosphopantetheine adenylyltransferase of Ralstonia pickettii (strain 12J).